We begin with the raw amino-acid sequence, 147 residues long: NADH-quinone oxidoreductase subunit A (147 aa).

Transmembrane regions (helical) follow at residues 16-36, 68-88, and 98-118; these read FAIFLIIAIGLCCLMLVGGWF, FYLVAMFFVIFDVEALYLFAW, and VGFVEAAIFIFVLLAGLVYLV.

It belongs to the complex I subunit 3 family. As to quaternary structure, NDH-1 is composed of 13 different subunits. Subunits NuoA, H, J, K, L, M, N constitute the membrane sector of the complex.

Its subcellular location is the cell inner membrane. The enzyme catalyses a quinone + NADH + 5 H(+)(in) = a quinol + NAD(+) + 4 H(+)(out). Functionally, NDH-1 shuttles electrons from NADH, via FMN and iron-sulfur (Fe-S) centers, to quinones in the respiratory chain. The immediate electron acceptor for the enzyme in this species is believed to be ubiquinone. Couples the redox reaction to proton translocation (for every two electrons transferred, four hydrogen ions are translocated across the cytoplasmic membrane), and thus conserves the redox energy in a proton gradient. In Citrobacter koseri (strain ATCC BAA-895 / CDC 4225-83 / SGSC4696), this protein is NADH-quinone oxidoreductase subunit A.